We begin with the raw amino-acid sequence, 311 residues long: Mas-related G-protein coupled receptor member E (311 aa).

The Extracellular portion of the chain corresponds to 1–25 (MEPREAGQHAGAADGAQEDVAFNLV). Residues 26-46 (ILSLTEGLGLGGLLGNGAVLW) traverse the membrane as a helical segment. The Cytoplasmic segment spans residues 47-63 (LLSSNVYRNPFAIYLLD). Residues 64 to 84 (VACADLIFLGCHMVAIIPDLL) form a helical membrane-spanning segment. Over 85–95 (QGRLDFPGFVQ) the chain is Extracellular. Residues 96–116 (TSLATLRFFCYIVGLSLLVAV) traverse the membrane as a helical segment. Residues 117–136 (SVEQCLAALFPAWYSCRRPR) lie on the Cytoplasmic side of the membrane. Residues 137–157 (HLTTCVCALTWACCLLLHLLL) form a helical membrane-spanning segment. At 158–177 (SGACTQFFGEPSRHLCRTLW) the chain is on the extracellular side. A helical transmembrane segment spans residues 178–198 (LVAAVLLAVLCCTMCGASLML). Topologically, residues 199–216 (LLQVERGPQRPPPRGFPT) are cytoplasmic. The chain crosses the membrane as a helical span at residues 217–237 (LILLAVLLFLFCGLPFGIYWL). At 238–251 (SRNLLWHIPHYFYH) the chain is on the extracellular side. A helical transmembrane segment spans residues 252–272 (FSFLTAAVYCAAKPVVYFCLG). The Cytoplasmic segment spans residues 273-311 (SAQGRRLPLRLVLQRALGDEAELGAVRETSRRGLVDIAA).

This sequence belongs to the G-protein coupled receptor 1 family. Mas subfamily.

Its subcellular location is the cell membrane. Functionally, orphan receptor. May regulate nociceptor function and/or development, including the sensation or modulation of pain. The polypeptide is Mas-related G-protein coupled receptor member E (MRGPRE) (Macaca fascicularis (Crab-eating macaque)).